A 450-amino-acid chain; its full sequence is Ammonium transporter Rh type A (450 aa).

The Cytoplasmic segment spans residues 1 to 4 (MRFK). Residues 5 to 25 (FSLIALSLEVVMIVSFALFVE) form a helical membrane-spanning segment. Residues 26 to 72 (YETSQNGSQKSASQQNASQQNAAAQQNASQQGNASSPAKEDQFFQLY) lie on the Extracellular side of the membrane. N-linked (GlcNAc...) asparagine glycosylation is found at asparagine 31, asparagine 41, asparagine 52, and asparagine 58. A disordered region spans residues 34-61 (QKSASQQNASQQNAAAQQNASQQGNASS). Residues 73 to 93 (PLFQHVHVMIFVGFGFLMTFL) form a helical membrane-spanning segment. Topologically, residues 94–97 (KKYG) are cytoplasmic. Residues 98 to 118 (FSGVGFNLFLAALGLQWGTIV) form a helical membrane-spanning segment. Topologically, residues 119-134 (QGLLHSHGLKFPFRIK) are extracellular. A helical membrane pass occupies residues 135-155 (NMINADFSTATVLISFGAVLG). Topologically, residues 156–159 (KTSP) are cytoplasmic. A helical membrane pass occupies residues 160–180 (IQMIIMTILEIAVFAGNEHLV). The Extracellular segment spans residues 181–189 (TEIFKASDT). Residues 190-210 (GASMTIHAFGAYFGLAVAGVL) traverse the membrane as a helical segment. Residues 211 to 229 (YRSGLKHGHPNEESVYHSD) are Cytoplasmic-facing. Residues 230–250 (LFAMIGTLFLWMFWPSFNSAI) traverse the membrane as a helical segment. Residues 251 to 260 (AQPENNQYRA) lie on the Extracellular side of the membrane. A helical transmembrane segment spans residues 261–281 (IVNTYMSLAACVITAYALSSL). Residues 282–289 (VERRGRLD) are Cytoplasmic-facing. The helical transmembrane segment at 290–307 (MVHIQNATLAGGVAVGTC) threads the bilayer. At 308 to 311 (ADME) the chain is on the extracellular side. A helical transmembrane segment spans residues 312-332 (IPLYFAMTIGSIAGIISVLGY). Residues 333–349 (KFLSPLLAHKLMIHDTC) lie on the Cytoplasmic side of the membrane. The chain crosses the membrane as a helical span at residues 350-370 (GVHNLHGLPGVFGGLASIVAI). Residues 371–384 (SWGKSTVSTMAMQA) are Extracellular-facing. A helical transmembrane segment spans residues 385 to 405 (TALGSSIGSAIVGGLVTGLIL). Topologically, residues 406–450 (KLPVWNQPPDEYCFDDSVSWKVPKYRELDNYFFQHVTHNHVEHEV) are cytoplasmic.

This sequence belongs to the ammonium transporter (TC 2.A.49) family. Rh subfamily. Homodimer. Heterotrimer; a RHCE monomer interacts with a RHAG homodimer. Component of the ankyrin-1 complex in the erythrocyte, composed of ANK1, RHCE, RHAG, SLC4A1, EPB42, GYPA, GYPB and AQP1. Interacts with GYPB (via the N-terminal); this interaction bridges the (RHAG)2(RHCE) heterotrimer with the SLC4A1 Band 3 I dimer complexed with GYPA. Glycosylated.

The protein resides in the membrane. The enzyme catalyses methylamine(out) = methylamine(in). It catalyses the reaction NH4(+)(in) = NH4(+)(out). The catalysed reaction is CO2(out) = CO2(in). In terms of biological role, component of the ankyrin-1 complex, a multiprotein complex involved in the stability and shape of the erythrocyte membrane. Heterotrimer with RHCE (RHAG)2(RHCE), that transports ammonium and its related derivative methylammonium, in both neutral and ionic forms, across the erythrocyte membrane. The transport of NH4(+) is electrogenic and masks the NH3 transport. Also, may act as a CO2 channel. Moreover in erythrocyte, regulates RHD membrane expression and is associated with rhesus blood group antigen expression. The protein is Ammonium transporter Rh type A of Rattus norvegicus (Rat).